Consider the following 409-residue polypeptide: Peptidase T (409 aa).

Histidine 78 contributes to the Zn(2+) binding site. Aspartate 80 is an active-site residue. Zn(2+) is bound at residue aspartate 140. The active-site Proton acceptor is the glutamate 174. Zn(2+) contacts are provided by glutamate 175, aspartate 197, and histidine 379.

It belongs to the peptidase M20B family. It depends on Zn(2+) as a cofactor.

It is found in the cytoplasm. It catalyses the reaction Release of the N-terminal residue from a tripeptide.. In terms of biological role, cleaves the N-terminal amino acid of tripeptides. The chain is Peptidase T from Vibrio parahaemolyticus serotype O3:K6 (strain RIMD 2210633).